The following is a 1323-amino-acid chain: uncharacterized protein (1323 aa).

Over residues 1 to 11 (MRELQGDDSSR) the composition is skewed to basic and acidic residues. 2 disordered regions span residues 1 to 57 (MREL…SSYY) and 79 to 112 (IHES…HSET). Low complexity predominate over residues 12 to 21 (KSPPSDSVVK). Serine 24 carries the post-translational modification Phosphoserine. Residues 27 to 40 (DYEHSLKSLQDERT) are compositionally biased toward basic and acidic residues. Composition is skewed to polar residues over residues 42 to 57 (NYPN…SSYY) and 80 to 105 (HESS…SSTI). WD repeat units follow at residues 271–314 (RHST…DRAI), 320–360 (GHTR…FPVN), 364–403 (DWHN…APLH), 409–449 (ENIT…EEPE), 453–494 (TTDS…KEGP), and 502–551 (GHTD…LNSM). Residues 671–779 (EELSWIGQKY…SYLSGNLSVD (109 aa)) enclose the RWD domain. Positions 879–888 (SNSVADSDST) are enriched in polar residues. Residues 879 to 904 (SNSVADSDSTNYDDENSLNRGGTSES) form a disordered region. The RING-type; degenerate zinc-finger motif lies at 1265 to 1309 (CTFCCLSIHGLCIVCGLCLHVMHEDCYKEWFSNGDSISQSCSSGC).

This sequence belongs to the WD repeat WDR59 family.

In terms of biological role, may be involved in telomere capping. This is an uncharacterized protein from Schizosaccharomyces pombe (strain 972 / ATCC 24843) (Fission yeast).